Here is a 264-residue protein sequence, read N- to C-terminus: Neurexophilin-2 (264 aa).

The first 22 residues, 1 to 22 (MRLRPLPLVVVPGLLQLLFCDS), serve as a signal peptide directing secretion. Residues 23 to 90 (EKVVHATEGL…WDWLANITEV (68 aa)) are II. N-linked (GlcNAc...) asparagine glycosylation is found at N86, N139, N149, and N155. The segment at 91-169 (QEPLARTKRR…LVPPSKVVEF (79 aa)) is III. Positions 170-178 (EVSPQSTLE) are IV (linker domain). The interval 179–264 (TKESKSFNCR…HSETPYLSSG (86 aa)) is v (Cys-rich).

This sequence belongs to the neurexophilin family. May be proteolytically processed at the boundary between the N-terminal non-conserved and the central conserved domain in neuron-like cells. As to expression, brain, only in a scattered subpopulation of neurons that probably represent inhibitory interneurons.

The protein resides in the secreted. In terms of biological role, may be signaling molecules that resemble neuropeptides and that act by binding to alpha-neurexins and possibly other receptors. The polypeptide is Neurexophilin-2 (NXPH2) (Bos taurus (Bovine)).